Reading from the N-terminus, the 512-residue chain is Cobyric acid synthase (512 aa).

Positions 251-451 constitute a GATase cobBQ-type domain; it reads ALDIAVIRLP…IHGLFDSHHF (201 aa). Cysteine 332 functions as the Nucleophile in the catalytic mechanism. Histidine 443 is an active-site residue.

The protein belongs to the CobB/CobQ family. CobQ subfamily.

It participates in cofactor biosynthesis; adenosylcobalamin biosynthesis. Catalyzes amidations at positions B, D, E, and G on adenosylcobyrinic A,C-diamide. NH(2) groups are provided by glutamine, and one molecule of ATP is hydrogenolyzed for each amidation. This chain is Cobyric acid synthase, found in Yersinia enterocolitica serotype O:8 / biotype 1B (strain NCTC 13174 / 8081).